Consider the following 419-residue polypeptide: UDP-N-acetylglucosamine 1-carboxyvinyltransferase 2 (419 aa).

Position 22 to 23 (22 to 23 (KN)) interacts with phosphoenolpyruvate. Arg-92 is a UDP-N-acetyl-alpha-D-glucosamine binding site. The active-site Proton donor is the Cys-116. The residue at position 116 (Cys-116) is a 2-(S-cysteinyl)pyruvic acid O-phosphothioketal. UDP-N-acetyl-alpha-D-glucosamine contacts are provided by residues 121–125 (RPIDL), Asp-306, and Ile-328.

This sequence belongs to the EPSP synthase family. MurA subfamily.

It localises to the cytoplasm. It carries out the reaction phosphoenolpyruvate + UDP-N-acetyl-alpha-D-glucosamine = UDP-N-acetyl-3-O-(1-carboxyvinyl)-alpha-D-glucosamine + phosphate. The protein operates within cell wall biogenesis; peptidoglycan biosynthesis. Functionally, cell wall formation. Adds enolpyruvyl to UDP-N-acetylglucosamine. In Streptococcus mutans serotype c (strain ATCC 700610 / UA159), this protein is UDP-N-acetylglucosamine 1-carboxyvinyltransferase 2.